The following is a 377-amino-acid chain: tRNA-specific 2-thiouridylase MnmA (377 aa).

ATP-binding positions include 18–25 and M44; that span reads GMSGGVDS. The interaction with target base in tRNA stretch occupies residues 104 to 106; the sequence is NPD. Residue C109 is the Nucleophile of the active site. C109 and C209 are joined by a disulfide. G134 is an ATP binding site. Positions 159–161 are interaction with tRNA; sequence KDQ. Residue C209 is the Cysteine persulfide intermediate of the active site. The interaction with tRNA stretch occupies residues 324–325; the sequence is RY.

It belongs to the MnmA/TRMU family.

The protein localises to the cytoplasm. It carries out the reaction S-sulfanyl-L-cysteinyl-[protein] + uridine(34) in tRNA + AH2 + ATP = 2-thiouridine(34) in tRNA + L-cysteinyl-[protein] + A + AMP + diphosphate + H(+). In terms of biological role, catalyzes the 2-thiolation of uridine at the wobble position (U34) of tRNA, leading to the formation of s(2)U34. In Photobacterium profundum (strain SS9), this protein is tRNA-specific 2-thiouridylase MnmA.